The sequence spans 503 residues: Geissoschizine oxidase (503 aa).

A helical membrane pass occupies residues 7-27 (FSSPSFFFLLPFLFLLIKPLI). Residue Cys-441 participates in heme binding.

It belongs to the cytochrome P450 family. The cofactor is heme.

It is found in the membrane. It carries out the reaction (19E)-geissoschizine + reduced [NADPH--hemoprotein reductase] + O2 = akuammicine + formate + oxidized [NADPH--hemoprotein reductase] + H2O + H(+). The enzyme catalyses (19E)-geissoschizine + reduced [NADPH--hemoprotein reductase] + O2 = 3,17-didehydrostemmadenine + oxidized [NADPH--hemoprotein reductase] + 2 H2O. It catalyses the reaction 3,17-didehydrostemmadenine = 17-dehydropreakuammicine. The protein operates within alkaloid biosynthesis. Functionally, monooxygenase involved in the biosynthesis of curare monoterpene indole alkaloids (MIAs), natural products such as diaboline, a pharmacologically active compound used to regulate blood pressure. Curare alkaloids act as animal glycine receptor antagonists. Catalyzes the conversion of geissoschizine to dehydropreakuammicine by cyclization, which is spontaneously converted into akuammicine by aromatization. This chain is Geissoschizine oxidase, found in Strychnos sp.